The primary structure comprises 582 residues: Potassium-transporting ATPase potassium-binding subunit (582 aa).

10 helical membrane passes run 11–31 (AVFF…LAWV), 81–101 (LKAV…VLMF), 148–168 (FGIG…MPAF), 195–215 (LLPI…VQTI), 272–292 (VLTL…GAWV), 298–318 (GVAI…VAVV), 379–399 (ALGA…NGVG), 401–421 (GLLN…LMIG), 439–459 (VFVV…AAVV), and 551–571 (GLLI…ALVF).

The protein belongs to the KdpA family. In terms of assembly, the system is composed of three essential subunits: KdpA, KdpB and KdpC.

It is found in the cell membrane. Part of the high-affinity ATP-driven potassium transport (or Kdp) system, which catalyzes the hydrolysis of ATP coupled with the electrogenic transport of potassium into the cytoplasm. This subunit binds the extracellular potassium ions and delivers the ions to the membrane domain of KdpB through an intramembrane tunnel. The polypeptide is Potassium-transporting ATPase potassium-binding subunit (Halobacterium salinarum (strain ATCC 700922 / JCM 11081 / NRC-1) (Halobacterium halobium)).